Here is a 610-residue protein sequence, read N- to C-terminus: MYSLSRILQRSQRYNFAPSSFGAVSKLEVSSGGDKERVFKSFGLIYSKPQGLVRLYSARDVFSRFFGIHKLSSIADAKDKGDEVVREEELSESEEAVPVSGDVPEGVVDDDSLFEPELGSDNDDLEIEEKHSKDGGKPTKKRGQSELYESIVAYKSVKHVLEKWVKEGKDLSQAEVTLAIHNLRKRKSYAMCLQLWEWLGANTQFEFTEANYASQLDLVAKVHSLQKAEIFLKDIPESSRGEVVYRTLLANCVLKHHVNKAEDIFNKMKELKFPTSVFACNQLLLLYSMHDRKKISDVLLLMERENIKPSRATYHFLINSKGLAGDITGMEKIVETIKEEGIELDPELQSILAKYYIRAGLKERAQDLMKEIEGKGLQQTPWVCRSLLPLYADIGDSDNVRRLSRFVDQNPRYDNCISAIKAWGKLKEVEEAEAVFERLVEKYKIFPMMPYFALMEIYTENKMLAKGRDLVKRMGNAGIAIGPSTWHALVKLYIKAGEVGKAELILNRATKDNKMRPMFTTYMAILEEYAKRGDVHNTEKVFMKMKRASYAAQLMQYETVLLAYINAKTPAYGMIERMKADNVFPNKSLAAKLAQVNPFKKCPVSVLLDI.

A mitochondrion-targeting transit peptide spans Met1–Leu71. The interval Glu88–Arg142 is disordered. A compositionally biased stretch (acidic residues) spans Val107–Ile127. Over residues Glu128–Lys137 the composition is skewed to basic and acidic residues. 9 PPR repeats span residues Gly241–Thr275, Ser276–Pro309, Ser310–Leu344, Asp345–Gln379, Thr380–Asn410, Arg412–Lys442, Pro447–Ile481, Gly482–Pro517, and Met518–Ala552.

This sequence belongs to the PPR family. P subfamily.

Its subcellular location is the mitochondrion. The sequence is that of Pentatricopeptide repeat-containing protein At3g15590, mitochondrial from Arabidopsis thaliana (Mouse-ear cress).